Reading from the N-terminus, the 249-residue chain is DNA polymerase sliding clamp (249 aa).

This sequence belongs to the PCNA family. In terms of assembly, the subunits circularize to form a toroid; DNA passes through its center. Replication factor C (RFC) is required to load the toroid on the DNA. Homotrimer. Interacts with NucS.

Functionally, sliding clamp subunit that acts as a moving platform for DNA processing. Responsible for tethering the catalytic subunit of DNA polymerase and other proteins to DNA during high-speed replication. Regulates activity of NucS endonuclease and prevents non-specific cleavage. The chain is DNA polymerase sliding clamp from Pyrococcus abyssi (strain GE5 / Orsay).